The sequence spans 187 residues: Threonylcarbamoyl-AMP synthase (187 aa).

In terms of domain architecture, YrdC-like spans 4-187 (QSTIAAAITC…DAMNGKVFRG (184 aa)).

It belongs to the SUA5 family. TsaC subfamily.

It is found in the cytoplasm. It carries out the reaction L-threonine + hydrogencarbonate + ATP = L-threonylcarbamoyladenylate + diphosphate + H2O. Required for the formation of a threonylcarbamoyl group on adenosine at position 37 (t(6)A37) in tRNAs that read codons beginning with adenine. Catalyzes the conversion of L-threonine, HCO(3)(-)/CO(2) and ATP to give threonylcarbamoyl-AMP (TC-AMP) as the acyladenylate intermediate, with the release of diphosphate. The protein is Threonylcarbamoyl-AMP synthase of Pseudoalteromonas translucida (strain TAC 125).